We begin with the raw amino-acid sequence, 336 residues long: uncharacterized protein (336 aa).

29-36 (GPKSSGKS) serves as a coordination point for ATP.

Belongs to the archaeal ATPase family.

This is an uncharacterized protein from Methanocaldococcus jannaschii (strain ATCC 43067 / DSM 2661 / JAL-1 / JCM 10045 / NBRC 100440) (Methanococcus jannaschii).